Consider the following 226-residue polypeptide: Glutathione peroxidase 3 (226 aa).

The N-terminal stretch at 1–24 (MARLLQASCLLSLLLAGFVPQSRG) is a signal peptide. Sec-73 is an active-site residue. Sec-73 is a non-standard amino acid (selenocysteine).

The protein belongs to the glutathione peroxidase family. Homotetramer. In terms of tissue distribution, secreted in plasma.

The protein resides in the secreted. The catalysed reaction is 2 glutathione + H2O2 = glutathione disulfide + 2 H2O. It carries out the reaction tert-butyl hydroperoxide + 2 glutathione = tert-butanol + glutathione disulfide + H2O. Functionally, protects cells and enzymes from oxidative damage, by catalyzing the reduction of hydrogen peroxide, lipid peroxides and organic hydroperoxide, by glutathione. This chain is Glutathione peroxidase 3, found in Pongo pygmaeus (Bornean orangutan).